We begin with the raw amino-acid sequence, 334 residues long: 4-hydroxyproline 2-epimerase (334 aa).

Catalysis depends on C91, which acts as the Proton acceptor. Residues 92–93 (GH), H224, and D250 contribute to the substrate site. The active-site Proton donor is the C254. 255 to 256 (GT) contributes to the substrate binding site.

It belongs to the proline racemase family.

It carries out the reaction trans-4-hydroxy-L-proline = cis-4-hydroxy-D-proline. Catalyzes the epimerization of trans-4-hydroxy-L-proline (t4LHyp) to cis-4-hydroxy-D-proline (c4DHyp). Is likely involved in a degradation pathway that converts t4LHyp to alpha-ketoglutarate. Displays no proline racemase activity. In Spirosoma linguale (strain ATCC 33905 / DSM 74 / LMG 10896 / Claus 1), this protein is 4-hydroxyproline 2-epimerase.